We begin with the raw amino-acid sequence, 174 residues long: Transcriptional repressor NrdR (174 aa).

Residues 3–34 (CPFCQHSDTRVIDSRVSEDGTTIRRRRECEAC) fold into a zinc finger. In terms of domain architecture, ATP-cone spans 49-139 (PTVVKSDGGR…VYRSFQDVAD (91 aa)).

The protein belongs to the NrdR family. Requires Zn(2+) as cofactor.

Its function is as follows. Negatively regulates transcription of bacterial ribonucleotide reductase nrd genes and operons by binding to NrdR-boxes. This Xanthomonas oryzae pv. oryzae (strain MAFF 311018) protein is Transcriptional repressor NrdR.